The sequence spans 119 residues: Large ribosomal subunit protein uL22 (119 aa).

This sequence belongs to the universal ribosomal protein uL22 family. In terms of assembly, part of the 50S ribosomal subunit.

This protein binds specifically to 23S rRNA; its binding is stimulated by other ribosomal proteins, e.g. L4, L17, and L20. It is important during the early stages of 50S assembly. It makes multiple contacts with different domains of the 23S rRNA in the assembled 50S subunit and ribosome. Functionally, the globular domain of the protein is located near the polypeptide exit tunnel on the outside of the subunit, while an extended beta-hairpin is found that lines the wall of the exit tunnel in the center of the 70S ribosome. The polypeptide is Large ribosomal subunit protein uL22 (Chlorobium chlorochromatii (strain CaD3)).